The chain runs to 145 residues: D-aminoacyl-tRNA deacylase (145 aa).

Positions G137–P138 match the Gly-cisPro motif, important for rejection of L-amino acids motif.

Belongs to the DTD family. Homodimer.

The protein resides in the cytoplasm. It carries out the reaction glycyl-tRNA(Ala) + H2O = tRNA(Ala) + glycine + H(+). It catalyses the reaction a D-aminoacyl-tRNA + H2O = a tRNA + a D-alpha-amino acid + H(+). An aminoacyl-tRNA editing enzyme that deacylates mischarged D-aminoacyl-tRNAs. Also deacylates mischarged glycyl-tRNA(Ala), protecting cells against glycine mischarging by AlaRS. Acts via tRNA-based rather than protein-based catalysis; rejects L-amino acids rather than detecting D-amino acids in the active site. By recycling D-aminoacyl-tRNA to D-amino acids and free tRNA molecules, this enzyme counteracts the toxicity associated with the formation of D-aminoacyl-tRNA entities in vivo and helps enforce protein L-homochirality. This Limosilactobacillus fermentum (strain NBRC 3956 / LMG 18251) (Lactobacillus fermentum) protein is D-aminoacyl-tRNA deacylase.